A 195-amino-acid chain; its full sequence is 7-methyl-GTP pyrophosphatase (195 aa).

Catalysis depends on aspartate 71, which acts as the Proton acceptor.

This sequence belongs to the Maf family. YceF subfamily. A divalent metal cation serves as cofactor.

The protein resides in the cytoplasm. It carries out the reaction N(7)-methyl-GTP + H2O = N(7)-methyl-GMP + diphosphate + H(+). Functionally, nucleoside triphosphate pyrophosphatase that hydrolyzes 7-methyl-GTP (m(7)GTP). May have a dual role in cell division arrest and in preventing the incorporation of modified nucleotides into cellular nucleic acids. The sequence is that of 7-methyl-GTP pyrophosphatase from Shewanella oneidensis (strain ATCC 700550 / JCM 31522 / CIP 106686 / LMG 19005 / NCIMB 14063 / MR-1).